A 1484-amino-acid polypeptide reads, in one-letter code: Ral GTPase-activating protein subunit beta (1484 aa).

Disordered regions lie at residues 355–437 and 697–728; these read PRSD…APRR and GGENNLKSHSRTNSGISSASGGSTEPTTPDSE. At S359 the chain carries Phosphoserine. Residues T363 and T379 each carry the phosphothreonine modification. Composition is skewed to polar residues over residues 369–381, 392–428, and 701–725; these read SMPQSAAVNTTPP, NKATMKTSTVTTAHTSKVQHQASSTSPLSSPNQTSSE, and NLKSHSRTNSGISSASGGSTEPTTP. A phosphoserine mark is found at S421 and S710. Residue T724 is modified to Phosphothreonine. One can recognise a Rap-GAP domain in the interval 1138–1382; that stretch reads IGYLDLLPCR…TTLEKEVPVI (245 aa). S1275 bears the Phosphoserine mark. Residues 1301 to 1325 are disordered; that stretch reads DSLNSSQRLSPSSRMKKLPQGRPVP. The segment covering 1302 to 1313 has biased composition (low complexity); sequence SLNSSQRLSPSS.

As to quaternary structure, component of the heterodimeric RalGAP1 complex with RALGAPA1 and of the heterodimeric RalGAP2 complex with RALGAPA2. Heterodimerization is required for activity. In terms of tissue distribution, detected in brain, thymus, lung, heart, spleen, liver and testis (at protein level).

In terms of biological role, non-catalytic subunit of the heterodimeric RalGAP1 and RalGAP2 complexes which act as GTPase activators for the Ras-like small GTPases RALA and RALB. This Rattus norvegicus (Rat) protein is Ral GTPase-activating protein subunit beta.